Here is a 374-residue protein sequence, read N- to C-terminus: Ribosomal RNA large subunit methyltransferase G (374 aa).

This sequence belongs to the methyltransferase superfamily. RlmG family.

Its subcellular location is the cytoplasm. The catalysed reaction is guanosine(1835) in 23S rRNA + S-adenosyl-L-methionine = N(2)-methylguanosine(1835) in 23S rRNA + S-adenosyl-L-homocysteine + H(+). Its function is as follows. Specifically methylates the guanine in position 1835 (m2G1835) of 23S rRNA. The chain is Ribosomal RNA large subunit methyltransferase G from Pseudomonas entomophila (strain L48).